The chain runs to 271 residues: MWIDCRTIARSIEERTKERVEKLGFTPKLVSVACTDDPSALSYLKSQRKKAEKLGIAFEILNVSPEEIVSTLKKLGSDESVNGVFVARPFPPSFDEKEILSSVPVEKDVEGVNPANLGLLLYDEEIFPPCTAEAAVRILERETNLSGKRVTVVGRSVTVGKPLALMLLKKGRDATVTVCHSRTVNLEEITKNSDIVVVAVGRAHFLKKNMVKEGAIVIDVGINYVDGKLQGDVDPSVEEIARVTPVPGGVGQVTTALLFEHVVRAAERQRK.

Residues 154 to 156 (GRS), Ser181, and Ile222 each bind NADP(+).

The protein belongs to the tetrahydrofolate dehydrogenase/cyclohydrolase family. Homodimer.

It carries out the reaction (6R)-5,10-methylene-5,6,7,8-tetrahydrofolate + NADP(+) = (6R)-5,10-methenyltetrahydrofolate + NADPH. The enzyme catalyses (6R)-5,10-methenyltetrahydrofolate + H2O = (6R)-10-formyltetrahydrofolate + H(+). The protein operates within one-carbon metabolism; tetrahydrofolate interconversion. Functionally, catalyzes the oxidation of 5,10-methylenetetrahydrofolate to 5,10-methenyltetrahydrofolate and then the hydrolysis of 5,10-methenyltetrahydrofolate to 10-formyltetrahydrofolate. This Thermotoga sp. (strain RQ2) protein is Bifunctional protein FolD.